The following is a 558-amino-acid chain: Dihydroxy-acid dehydratase (558 aa).

Residue Asp-78 coordinates Mg(2+). Cys-119 is a [2Fe-2S] cluster binding site. Mg(2+) contacts are provided by Asp-120 and Lys-121. The residue at position 121 (Lys-121) is an N6-carboxylysine. Residue Cys-191 participates in [2Fe-2S] cluster binding. Glu-443 lines the Mg(2+) pocket. Ser-469 (proton acceptor) is an active-site residue.

Belongs to the IlvD/Edd family. As to quaternary structure, homodimer. It depends on [2Fe-2S] cluster as a cofactor. The cofactor is Mg(2+).

It carries out the reaction (2R)-2,3-dihydroxy-3-methylbutanoate = 3-methyl-2-oxobutanoate + H2O. It catalyses the reaction (2R,3R)-2,3-dihydroxy-3-methylpentanoate = (S)-3-methyl-2-oxopentanoate + H2O. Its pathway is amino-acid biosynthesis; L-isoleucine biosynthesis; L-isoleucine from 2-oxobutanoate: step 3/4. It participates in amino-acid biosynthesis; L-valine biosynthesis; L-valine from pyruvate: step 3/4. Functionally, functions in the biosynthesis of branched-chain amino acids. Catalyzes the dehydration of (2R,3R)-2,3-dihydroxy-3-methylpentanoate (2,3-dihydroxy-3-methylvalerate) into 2-oxo-3-methylpentanoate (2-oxo-3-methylvalerate) and of (2R)-2,3-dihydroxy-3-methylbutanoate (2,3-dihydroxyisovalerate) into 2-oxo-3-methylbutanoate (2-oxoisovalerate), the penultimate precursor to L-isoleucine and L-valine, respectively. The polypeptide is Dihydroxy-acid dehydratase (Solidesulfovibrio magneticus (strain ATCC 700980 / DSM 13731 / RS-1) (Desulfovibrio magneticus)).